We begin with the raw amino-acid sequence, 444 residues long: Exopolygalacturonase clone GBGA483 (444 aa).

Residues 1–23 form the signal peptide; it reads MVGSHKASGVLLVLLVVMATTIA. PbH1 repeat units lie at residues 220 to 246, 247 to 268, 270 to 290, 300 to 321, and 330 to 351; these read CKNI…HIGR, SNGV…SIGD, TENL…SIGS, VKGV…RIKT, and ASNI…LIDQ. An N-linked (GlcNAc...) asparagine glycan is attached at Asn222. Asp261 functions as the Proton donor in the catalytic mechanism. Cys263 and Cys280 are oxidised to a cystine. The active site involves His284. N-linked (GlcNAc...) asparagine glycosylation is present at Asn342. Intrachain disulfides connect Cys391–Cys397 and Cys420–Cys436.

It belongs to the glycosyl hydrolase 28 family.

Its subcellular location is the secreted. It is found in the cell wall. The enzyme catalyses [(1-&gt;4)-alpha-D-galacturonosyl](n) + H2O = alpha-D-galacturonate + [(1-&gt;4)-alpha-D-galacturonosyl](n-1). In terms of biological role, may function in depolymerizing pectin during pollen development, germination, and tube growth. Acts as an exo-polygalacturonase. This Arabidopsis thaliana (Mouse-ear cress) protein is Exopolygalacturonase clone GBGA483.